The primary structure comprises 269 residues: Putative ankyrin repeat protein L23 (269 aa).

ANK repeat units lie at residues 118-147, 148-177, 179-207, 208-237, and 238-267; these read EDDY…DIKS, DGDY…DIRA, NDYA…NIRE, QNDY…DIRA, and DNDC…DIRA.

This is Putative ankyrin repeat protein L23 from Acanthamoeba polyphaga (Amoeba).